The primary structure comprises 401 residues: Nodal homolog 3-A (401 aa).

A signal peptide spans 1–18 (MAFLNLFFCLVFISPLMA). A propeptide spanning residues 19–274 (MPPVLQGRKS…KVNGFRRLRR (256 aa)) is cleaved from the precursor. N-linked (GlcNAc...) asparagine glycans are attached at residues asparagine 168, asparagine 337, asparagine 341, and asparagine 344. 2 cysteine pairs are disulfide-bonded: cysteine 299/cysteine 365 and cysteine 328/cysteine 396.

The protein belongs to the TGF-beta family. As to quaternary structure, monomer. The propeptide region interacts with bmp4 in a non-covalent manner. As to expression, expressed in the epithelial layer of the Spemann organizer during gastrulation.

Its subcellular location is the secreted. Its function is as follows. Exhibits mesoderm-dorsalizing activity and neural-inducing activity, but lacks mesoderm-inducing activity. Regulates the expression of specific mesodermal and neural genes. Induces convergent extension movements at the embryonic midline by activating the fgf signaling pathway to induce t/bra expression in the organizer region. Acts with wnt11 to induce Spemann organizer cells and induce axis formation. The unprocessed protein antagonizes bmp-signaling. This Xenopus laevis (African clawed frog) protein is Nodal homolog 3-A (nodal3-a).